A 275-amino-acid polypeptide reads, in one-letter code: MNYSNPTQLQAAILDWAGTVVDFGSFAPTQIFVEAFAEFDVQVSIEEARGPMGMGKWDHIRTLCDVPEIAERYRKVFGRTPTDDDVTAIYERFMPLQIEKIAVHSALIPGALDTLTGLRKEGLKIGSCSGYPKVVMDKVVELAAQNGYVADHVVATDETPNGRPWPAQALANVIALGIDDVAACVKVDDTVPGILEGRRAGMWTVALVCSGNALGLTWEGYRALSAEKLESERKRIHGMFAASRPHYLIDTINELPEVIADINRRLAKGEMPQAV.

Aspartate 15 (nucleophile) is an active-site residue. Aspartate 15 and alanine 17 together coordinate Mg(2+). The active-site Schiff-base intermediate with substrate is the lysine 56. Aspartate 189 contributes to the Mg(2+) binding site.

This sequence belongs to the HAD-like hydrolase superfamily. PhnX family. In terms of assembly, homodimer. Requires Mg(2+) as cofactor.

The catalysed reaction is phosphonoacetaldehyde + H2O = acetaldehyde + phosphate + H(+). In terms of biological role, involved in phosphonate degradation. This chain is Phosphonoacetaldehyde hydrolase, found in Pseudomonas entomophila (strain L48).